Consider the following 527-residue polypeptide: Gustatory receptor for bitter taste 66a (527 aa).

Topologically, residues 1-46 are cytoplasmic; that stretch reads MAQAEDAVQPLLQQFQQLFFISKIAGILPQDLEKFRSRNLLEKSRN. Residues 47-67 traverse the membrane as a helical segment; it reads GMIYMLSTLILYVVLYNILIY. Topologically, residues 68 to 80 are extracellular; sequence SFGEEDRSLKASQ. The chain crosses the membrane as a helical span at residues 81-101; the sequence is STLTFVIGLFLTYIGLIMMVS. The Cytoplasmic segment spans residues 102-144; it reads DQLTALRNQGRIGELYERIRLVDERLYKEGCVMDNSTIGRRIR. Residues 145-165 form a helical membrane-spanning segment; the sequence is IMLIMTVIFELSILVSTYVKL. Residues 166-174 lie on the Extracellular side of the membrane; sequence VDYSQWMSL. Residues 175–195 form a helical membrane-spanning segment; it reads LWIVSAIPTFINTLDKIWFAV. Over 196–345 the chain is Cytoplasmic; sequence SLYALKERFE…KALNELWSYP (150 aa). The helical transmembrane segment at 346–366 threads the bilayer; that stretch reads ILSLMAYGFLIFTAQLYFLYC. The Extracellular portion of the chain corresponds to 367 to 382; the sequence is ATQYQSIPSLFRSAKN. A helical membrane pass occupies residues 383-403; sequence PFITVIVLSYTSGKCVYLIYL. Over 404 to 460 the chain is Cytoplasmic; that stretch reads SWKTSQASKRTGISLHKCGVVADDNLLYEIVNHLSLKLLNHSVDFSACGFFTLDMET. The chain crosses the membrane as a helical span at residues 461–481; the sequence is LYGVSGGITSYLIILIQFNLA. At 482-527 the chain is on the extracellular side; it reads AQQAKEAIQTFNSLNDTAGLVGAATDMDNISSTLRDFVTTTMTPAV. 2 N-linked (GlcNAc...) asparagine glycosylation sites follow: Asn-496 and Asn-510.

Belongs to the insect chemoreceptor superfamily. Gustatory receptor (GR) family. Gr66a subfamily. Taste hairs in labial palps, labral and cibarial sense organs and forelegs. In larvae, is expressed in neurons of the terminal external chemosensory organ, as well as in the dorsal, ventral, and posterior pharyngeal sense organs.

Its subcellular location is the cell membrane. Its function is as follows. Gustatory receptor required for response to the bitter in taste neurons. Gr66a cells respond to bitter compounds such as caffeine, theophylline, threonine or valine. Flies avoid bitter substances, suggesting that Gr66a neuron activity is sufficient to mediate avoidance behavior. Required for sensing and avoiding N,N-Diethyl-meta-toluamide (DEET), the most widely used insect repellent worldwide, as well as to L-canavanine, a plant-derived insecticide. Gr66a neurons are also involved in the sex-specific perception of molecules inducing male avoidance behavior, probably through sensing 7-tricosene (7-T), a male cuticular pheromone and leading to inhibition of male-male courtship. Finally, also plays a role in oviposition behavior, in which females evaluate their environment and choose to lay eggs on substrates they may find aversive in other contexts. The chain is Gustatory receptor for bitter taste 66a (Gr66a) from Drosophila melanogaster (Fruit fly).